We begin with the raw amino-acid sequence, 152 residues long: Small ribosomal subunit protein uS15 (152 aa).

A compositionally biased stretch (basic residues) spans 1-10 (MAKMHTRTKG). A disordered region spans residues 1–26 (MAKMHTRTKGKSGSTKPIRSESPAWS). Residues 11 to 26 (KSGSTKPIRSESPAWS) show a composition bias toward polar residues.

Belongs to the universal ribosomal protein uS15 family. As to quaternary structure, part of the 30S ribosomal subunit.

The polypeptide is Small ribosomal subunit protein uS15 (Methanococcoides burtonii (strain DSM 6242 / NBRC 107633 / OCM 468 / ACE-M)).